Here is a 526-residue protein sequence, read N- to C-terminus: Nitrogenase iron-iron protein alpha chain (526 aa).

Cys-49, Cys-75, and Cys-138 together coordinate [8Fe-7S] cluster. Cys-257 and His-423 together coordinate [8Fe-9S-C-homocitryl] cluster. A disordered region spans residues Arg-507–Glu-526.

The protein belongs to the NifD/NifK/NifE/NifN family. In terms of assembly, hexamer of two alpha, two beta, and two delta chains. Requires [8Fe-7S] cluster as cofactor. [8Fe-9S-C-homocitryl] cluster serves as cofactor.

It carries out the reaction N2 + 8 reduced [2Fe-2S]-[ferredoxin] + 16 ATP + 16 H2O = H2 + 8 oxidized [2Fe-2S]-[ferredoxin] + 2 NH4(+) + 16 ADP + 16 phosphate + 6 H(+). Functionally, this iron-iron protein is part of the nitrogenase complex that catalyzes the key enzymatic reactions in nitrogen fixation. Other nitrogenase complexes utilize a molybdenum-iron protein or a vanadium-iron protein. This Rhodobacter capsulatus (Rhodopseudomonas capsulata) protein is Nitrogenase iron-iron protein alpha chain (anfD).